The chain runs to 429 residues: Ribosomal RNA small subunit methyltransferase B (429 aa).

Residues 254-260 (CAAPGGK), aspartate 277, aspartate 303, and aspartate 322 each bind S-adenosyl-L-methionine. The Nucleophile role is filled by cysteine 375.

The protein belongs to the class I-like SAM-binding methyltransferase superfamily. RsmB/NOP family.

The protein resides in the cytoplasm. The catalysed reaction is cytidine(967) in 16S rRNA + S-adenosyl-L-methionine = 5-methylcytidine(967) in 16S rRNA + S-adenosyl-L-homocysteine + H(+). Functionally, specifically methylates the cytosine at position 967 (m5C967) of 16S rRNA. In Escherichia coli O127:H6 (strain E2348/69 / EPEC), this protein is Ribosomal RNA small subunit methyltransferase B.